Consider the following 395-residue polypeptide: Putative nickel insertion protein (395 aa).

It belongs to the LarC family.

The chain is Putative nickel insertion protein from Archaeoglobus fulgidus (strain ATCC 49558 / DSM 4304 / JCM 9628 / NBRC 100126 / VC-16).